We begin with the raw amino-acid sequence, 129 residues long: MKSVQFCFLFCCWRAICCRSCELTNITITVEKEECGFCISINTTWCAGYCYTRDLVYRDPARPNIQKTCTFKELVYETVKVPGCAHHADSLYTYPVATECHCSKCDSDSTDCTVRGLGPSYCSFREIKE.

A signal peptide spans 1–20 (MKSVQFCFLFCCWRAICCRS). 6 cysteine pairs are disulfide-bonded: cysteine 21–cysteine 69, cysteine 35–cysteine 84, cysteine 38–cysteine 122, cysteine 46–cysteine 100, cysteine 50–cysteine 102, and cysteine 105–cysteine 112. 2 N-linked (GlcNAc...) asparagine glycosylation sites follow: asparagine 25 and asparagine 42.

The protein belongs to the glycoprotein hormones subunit beta family. As to quaternary structure, heterodimer. The active follitropin is a heterodimer composed of an alpha chain/CGA shared with other hormones and a unique beta chain/FSHB shown here.

It localises to the secreted. Its function is as follows. Together with the alpha chain CGA constitutes follitropin, the follicle-stimulating hormone, and provides its biological specificity to the hormone heterodimer. Binds FSHR, a G protein-coupled receptor, on target cells to activate downstream signaling pathways. Follitropin is involved in follicle development and spermatogenesis in reproductive organs. This chain is Follitropin subunit beta (FSHB), found in Bos taurus (Bovine).